Consider the following 177-residue polypeptide: UPF0177 protein YxdF (177 aa).

4 consecutive transmembrane segments (helical) span residues 2–22, 30–50, 117–137, and 152–172; these read TLVL…KNTL, IFWL…VTVL, ALVH…SFII, and IVHS…DTFF.

It belongs to the UPF0177 family.

It is found in the cell membrane. This chain is UPF0177 protein YxdF (yxdF), found in Lactococcus lactis subsp. lactis (strain IL1403) (Streptococcus lactis).